The chain runs to 630 residues: DNA mismatch repair protein MutL (630 aa).

2 disordered regions span residues 361–386 and 407–431; these read VLSS…APAE and FERK…GQAE. Over residues 407–421 the composition is skewed to basic and acidic residues; sequence FERKQEEEVGEERCS.

The protein belongs to the DNA mismatch repair MutL/HexB family.

Functionally, this protein is involved in the repair of mismatches in DNA. It is required for dam-dependent methyl-directed DNA mismatch repair. May act as a 'molecular matchmaker', a protein that promotes the formation of a stable complex between two or more DNA-binding proteins in an ATP-dependent manner without itself being part of a final effector complex. This Geobacillus kaustophilus (strain HTA426) protein is DNA mismatch repair protein MutL.